The following is a 589-amino-acid chain: MNEKNSDEINYDFKVDSNLNHTTSHLLAAAIVQLYPNVKLGFGPAIEEGFYYDFEFENPLSKLELLKIEKLMKKLASMNLKMVKVDGSNYDFTNKPYKKELYDELKQKGQEITFYSLVDTNGKEIFTDLCAGGHVESTSKINNFKLLSLAGAYWRGNSNNIQLTRIYGSSFYKKDELENYLKVIEDRKERDHRKIGKNLGIFTFSSLSGLGFPIWLKKGMLIKRAIEKEILYLDRKYGFEEVLSPHFGEESLYIKSGHLAHYQETMFKSLEVENEKLIPRPMTCPHHIIIYDAFPRSYRELPLRLSEQSRLYRYEKSGALTGLERVRTMDLTEGHIFIRQDQIKDEVLNMINLIQETLKIFKIKIDHVALSLRDNDKEKFFDDDQMWDQAESALKEILDQNKIDYIVEKGEAAFYGPKIDFQVKTVLNNIITMSTIQLDFLLPRKFNISYIAPDGSKQTPLMIHRGLIGTYERFVSILLEQTKGNFPFWLSPSQVIVLPIAKEFKEYAFEIYSKIFKQNFNVEIDNRDETINKKIREAQINKYKYQIIIGKQEMENKTIAIREYGKVQTITMDLESFIEKIKSQRDSKE.

Residues aspartate 191 to proline 487 form a catalytic region. Cysteine 284, histidine 335, and histidine 464 together coordinate Zn(2+).

Belongs to the class-II aminoacyl-tRNA synthetase family. Homodimer. Zn(2+) is required as a cofactor.

It localises to the cytoplasm. It catalyses the reaction tRNA(Thr) + L-threonine + ATP = L-threonyl-tRNA(Thr) + AMP + diphosphate + H(+). In terms of biological role, catalyzes the attachment of threonine to tRNA(Thr) in a two-step reaction: L-threonine is first activated by ATP to form Thr-AMP and then transferred to the acceptor end of tRNA(Thr). Also edits incorrectly charged L-seryl-tRNA(Thr). This chain is Threonine--tRNA ligase, found in Mycoplasmopsis pulmonis (strain UAB CTIP) (Mycoplasma pulmonis).